Reading from the N-terminus, the 479-residue chain is Glutamyl-tRNA(Gln) amidotransferase subunit A (479 aa).

Residues lysine 74 and serine 149 each act as charge relay system in the active site. Serine 173 serves as the catalytic Acyl-ester intermediate.

Belongs to the amidase family. GatA subfamily. In terms of assembly, heterotrimer of A, B and C subunits.

The catalysed reaction is L-glutamyl-tRNA(Gln) + L-glutamine + ATP + H2O = L-glutaminyl-tRNA(Gln) + L-glutamate + ADP + phosphate + H(+). Allows the formation of correctly charged Gln-tRNA(Gln) through the transamidation of misacylated Glu-tRNA(Gln) in organisms which lack glutaminyl-tRNA synthetase. The reaction takes place in the presence of glutamine and ATP through an activated gamma-phospho-Glu-tRNA(Gln). The polypeptide is Glutamyl-tRNA(Gln) amidotransferase subunit A (Cenarchaeum symbiosum (strain A)).